Here is an 82-residue protein sequence, read N- to C-terminus: Mitotic-spindle organizing protein 1 (82 aa).

The residue at position 2 (Ala2) is an N-acetylalanine.

It belongs to the MOZART1 family. Associates with the gamma-tubulin ring complex (gTuRC) consisting of TUBGCP2, TUBGCP3, TUBGCP4, TUBGCP5 and TUBGCP6 and gamma-tubulin TUBG1 or TUBG2; within the complex, interacts with TUBGCP3 and TUBGCP6 to form a luminal bridge with actin that stabilizes the initial structure during complex assembly. Interacts with TUBG1.

It is found in the cytoplasm. It localises to the cytoskeleton. The protein resides in the microtubule organizing center. The protein localises to the centrosome. Its subcellular location is the spindle. Its function is as follows. Required for the recruitment and the assembly of the gamma-tubulin ring complex (gTuRC) at the centrosome. The gTuRC regulates the minus-end nucleation of alpha-beta tubulin heterodimers that grow into microtubule protafilaments, a critical step in centrosome duplication and spindle formation. The chain is Mitotic-spindle organizing protein 1 (MZT1) from Homo sapiens (Human).